A 340-amino-acid chain; its full sequence is MSFDALLLLSFGGPEAPEQVMPFLENVTRGRGIPRERLESVAEHYLHFGGVSPINGINRDLIVAIEAELARRGRNLPVYFGNRNWEPYVEDTVKAMSDNGIRRAAVFATSAWGGYSGCAQYQEDIARGRAAAGPEAPELVKLRQYFDHPLFVEMFADAVADAAATLPEELRDEARLVFTAHSIPLRAASRCGADLYERQVGYAARLVAAAAGYREYDQVWQSRSGPPQVPWLEPDVGDHLEALARNGTRAVIVCPLGFVADHIEVVWDLDNELAEQAAEAGIAFARAATPNSQPRFAQLVVDLIDEMLHGLPPRRVEGPDPVPAYGSSVNGAPCTPACSA.

2 residues coordinate Fe-coproporphyrin III: S52 and Y121. 2 residues coordinate Fe(2+): H181 and E264.

It belongs to the ferrochelatase family.

The protein localises to the cytoplasm. The enzyme catalyses Fe-coproporphyrin III + 2 H(+) = coproporphyrin III + Fe(2+). It functions in the pathway porphyrin-containing compound metabolism; protoheme biosynthesis. Involved in coproporphyrin-dependent heme b biosynthesis. Catalyzes the insertion of ferrous iron into coproporphyrin III to form Fe-coproporphyrin III. This chain is Coproporphyrin III ferrochelatase, found in Mycolicibacterium smegmatis (strain ATCC 700084 / mc(2)155) (Mycobacterium smegmatis).